The primary structure comprises 254 residues: Cytochrome c oxidase subunit 2 (254 aa).

Over 1-37 (MNNILNFYPAVITTDVAENWQIGFQDPATPIMEGIIN) the chain is Mitochondrial intermembrane. The chain crosses the membrane as a helical span at residues 38–58 (LHYDLMFFICVISVFVSWMLG). Topologically, residues 59–83 (RTLWHFEQNQNKIPSSLTHGTLIEM) are mitochondrial matrix. The helical transmembrane segment at 84–104 (IWTVTPAFILLIIAVPSFSLL) threads the bilayer. At 105-254 (YAMDEIISPA…VSWISNKLNE (150 aa)) the chain is on the mitochondrial intermembrane side. 6 residues coordinate Cu cation: histidine 186, cysteine 221, glutamate 223, cysteine 225, histidine 229, and methionine 232. A Mg(2+)-binding site is contributed by glutamate 223.

This sequence belongs to the cytochrome c oxidase subunit 2 family. In terms of assembly, component of the cytochrome c oxidase (complex IV, CIV), a multisubunit enzyme composed of a catalytic core of 3 subunits and several supernumerary subunits. The complex exists as a monomer or a dimer and forms supercomplexes (SCs) in the inner mitochondrial membrane with ubiquinol-cytochrome c oxidoreductase (cytochrome b-c1 complex, complex III, CIII). Requires Cu cation as cofactor.

Its subcellular location is the mitochondrion inner membrane. It catalyses the reaction 4 Fe(II)-[cytochrome c] + O2 + 8 H(+)(in) = 4 Fe(III)-[cytochrome c] + 2 H2O + 4 H(+)(out). In terms of biological role, component of the cytochrome c oxidase, the last enzyme in the mitochondrial electron transport chain which drives oxidative phosphorylation. The respiratory chain contains 3 multisubunit complexes succinate dehydrogenase (complex II, CII), ubiquinol-cytochrome c oxidoreductase (cytochrome b-c1 complex, complex III, CIII) and cytochrome c oxidase (complex IV, CIV), that cooperate to transfer electrons derived from NADH and succinate to molecular oxygen, creating an electrochemical gradient over the inner membrane that drives transmembrane transport and the ATP synthase. Cytochrome c oxidase is the component of the respiratory chain that catalyzes the reduction of oxygen to water. Electrons originating from reduced cytochrome c in the intermembrane space (IMS) are transferred via the dinuclear copper A center (CU(A)) of subunit 2 and heme A of subunit 1 to the active site in subunit 1, a binuclear center (BNC) formed by heme A3 and copper B (CU(B)). The BNC reduces molecular oxygen to 2 water molecules using 4 electrons from cytochrome c in the IMS and 4 protons from the mitochondrial matrix. The polypeptide is Cytochrome c oxidase subunit 2 (COX2) (Chondrus crispus (Carrageen Irish moss)).